We begin with the raw amino-acid sequence, 179 residues long: Large ribosomal subunit protein uL10 (179 aa).

The tract at residues 137–179 (KEELYAMLVGRVKAPITGLVFALSGILRNLVYVLNAIKEKKSE) is binds L7/L12 dimers.

Part of the ribosomal stalk of the 50S ribosomal subunit. The N-terminus interacts with L11 and 23S rRNA to form the base of the stalk. The C-terminus forms an elongated spine to which 3 L12 dimers bind in a sequential fashion forming a heptameric L10(L12)2(L12)2(L12)2 complex.

Its function is as follows. Forms part of the ribosomal stalk, playing a central role in the interaction of the ribosome with GTP-bound translation factors (such as IF-2, EF-Tu, EF-G and RF3). This is Large ribosomal subunit protein uL10 (rplJ) from Thermotoga maritima (strain ATCC 43589 / DSM 3109 / JCM 10099 / NBRC 100826 / MSB8).